A 77-amino-acid polypeptide reads, in one-letter code: RNA-binding protein Hfq (77 aa).

The 61-residue stretch at 9–69 folds into the Sm domain; that stretch reads DQFLNQLRKE…ISTFAPQKNV (61 aa).

Belongs to the Hfq family. As to quaternary structure, homohexamer.

RNA chaperone that binds small regulatory RNA (sRNAs) and mRNAs to facilitate mRNA translational regulation in response to envelope stress, environmental stress and changes in metabolite concentrations. Also binds with high specificity to tRNAs. The protein is RNA-binding protein Hfq of Shouchella clausii (strain KSM-K16) (Alkalihalobacillus clausii).